Consider the following 439-residue polypeptide: UDP-N-acetylglucosamine--peptide N-acetylglucosaminyltransferase stabilizing protein GtfB (439 aa).

Belongs to the GtfB family. As to quaternary structure, interacts with glycosyltransferase GtfA (Gtf2); probably forms a heterotetramer with 2 subunits each of GtfA and GtfB. Part of the accessory SecA2/SecY2 protein translocation apparatus.

It localises to the cell membrane. The protein operates within protein modification; protein glycosylation. Required for the polymorphic O-glycosylation of the serine-rich repeat protein Fap1. A stabilizing protein that is part of the accessory SecA2/SecY2 system specifically required to export Fap1, a serine-rich fimbrial adhesin encoded upstream in the same operon. The GtfA-GtfB (Gtf1-Gtf2 in this bacteria) complex adds GlcNAc from UDP-GlcNAc to Fap1, attaching the first sugar residue. Cannot use not UDP-Glc as substrate. Stabilizes the glycosylation activity of GtfA, causing it to partially localize to the cellular membrane where it is more protease resistant. In Streptococcus parasanguinis, this protein is UDP-N-acetylglucosamine--peptide N-acetylglucosaminyltransferase stabilizing protein GtfB.